A 510-amino-acid chain; its full sequence is ATP synthase subunit alpha (510 aa).

Position 169-176 (169-176 (GDRQTGKT)) interacts with ATP.

It belongs to the ATPase alpha/beta chains family. As to quaternary structure, F-type ATPases have 2 components, CF(1) - the catalytic core - and CF(0) - the membrane proton channel. CF(1) has five subunits: alpha(3), beta(3), gamma(1), delta(1), epsilon(1). CF(0) has three main subunits: a(1), b(2) and c(9-12). The alpha and beta chains form an alternating ring which encloses part of the gamma chain. CF(1) is attached to CF(0) by a central stalk formed by the gamma and epsilon chains, while a peripheral stalk is formed by the delta and b chains.

Its subcellular location is the cell membrane. The catalysed reaction is ATP + H2O + 4 H(+)(in) = ADP + phosphate + 5 H(+)(out). Functionally, produces ATP from ADP in the presence of a proton gradient across the membrane. The alpha chain is a regulatory subunit. This is ATP synthase subunit alpha from Buchnera aphidicola subsp. Schizaphis graminum (strain Sg).